The sequence spans 650 residues: Phosphatidylinositol 4-kinase gamma 7 (650 aa).

The region spanning 46 to 103 is the Ubiquitin-like; degenerate domain; sequence RRVFVQTETGCVLGMELDRSDNVHTVKRRLQIALNFPTEESSLTYGDMVLTNDLSAVR. Positions 166–463 constitute a PI3K/PI4K catalytic domain; the sequence is GVEPLPVHSG…SVTERDVFSP (298 aa). Positions 172–178 are G-loop; it reads VHSGLGG. ATP is bound by residues 173 to 179, lysine 194, and 283 to 286; these read HSGLGGA and QKFV. The interval 316 to 324 is catalytic loop; sequence FNTDRHGGN. The tract at residues 343–369 is activation loop; the sequence is PIDHGLCLPETLEDPYFEWIHWPQASL. Aspartate 345 provides a ligand contact to ATP. Disordered regions lie at residues 508–534 and 560–595; these read SLGKLEESIKEEEEDEEEEEDKTENTV and STSMKNTHLSDTTRKNPKPLTRGKSENTSSGHKSAN. Over residues 516–529 the composition is skewed to acidic residues; that stretch reads IKEEEEDEEEEEDK. Polar residues-rich tracts occupy residues 560–569 and 585–595; these read STSMKNTHLS and ENTSSGHKSAN. The residue at position 593 (serine 593) is a Phosphoserine.

The protein belongs to the PI3/PI4-kinase family. Type II PI4K subfamily.

It catalyses the reaction a 1,2-diacyl-sn-glycero-3-phospho-(1D-myo-inositol) + ATP = a 1,2-diacyl-sn-glycero-3-phospho-(1D-myo-inositol 4-phosphate) + ADP + H(+). The phosphorylation of phosphatidylinositol (PI) to PI4P is the first committed step in the generation of phosphatidylinositol 4,5-bisphosphate (PIP2), a precursor of the second messenger inositol 1,4,5-trisphosphate (InsP3). Undergoes autophosphorylation and phosphorylates serine/threonine residues of protein substrates. The sequence is that of Phosphatidylinositol 4-kinase gamma 7 from Arabidopsis thaliana (Mouse-ear cress).